Consider the following 431-residue polypeptide: Cleavage stimulation factor subunit 1 (431 aa).

WD repeat units follow at residues 106–145, 171–210, 215–254, 260–301, 303–343, and 395–431; these read SHKG…AKSA, DHVD…AKRA, QEAE…CFVS, QHTD…TTFE, AHDG…TLVR, and GHNN…STTD.

As to quaternary structure, homodimer. The CSTF complex is composed of CSTF1 (50 kDa subunit), CSTF2 (64 kDa subunit) and CSTF3 (77 kDa subunit). Interacts (via repeats WD) directly with CSTF3. Interacts (via repeat WD6) with BARD1. Interacts with ERCC6.

The protein localises to the nucleus. In terms of biological role, one of the multiple factors required for polyadenylation and 3'-end cleavage of mammalian pre-mRNAs. May be responsible for the interaction of CSTF with other factors to form a stable complex on the pre-mRNA. The polypeptide is Cleavage stimulation factor subunit 1 (Cstf1) (Mus musculus (Mouse)).